The sequence spans 253 residues: E3 ubiquitin-protein ligase MARCHF3 (253 aa).

The RING-CH-type zinc-finger motif lies at 63–123 (SPFNDRPMCR…ELCHFRFAVE (61 aa)). Zn(2+) is bound by residues cysteine 71, cysteine 74, cysteine 87, cysteine 89, histidine 97, cysteine 100, cysteine 113, and cysteine 116. Helical transmembrane passes span 145–165 (LFGD…SGWL) and 182–202 (AVGL…WTLV). Serine 237 and serine 243 each carry phosphoserine.

Interacts with MARCHF2 and STX6.

The protein localises to the cytoplasmic vesicle membrane. It is found in the early endosome membrane. The catalysed reaction is S-ubiquitinyl-[E2 ubiquitin-conjugating enzyme]-L-cysteine + [acceptor protein]-L-lysine = [E2 ubiquitin-conjugating enzyme]-L-cysteine + N(6)-ubiquitinyl-[acceptor protein]-L-lysine.. Its pathway is protein modification; protein ubiquitination. Functionally, E3 ubiquitin-protein ligase which may be involved in endosomal trafficking. E3 ubiquitin ligases accept ubiquitin from an E2 ubiquitin-conjugating enzyme in the form of a thioester and then directly transfer the ubiquitin to targeted substrates. This chain is E3 ubiquitin-protein ligase MARCHF3, found in Homo sapiens (Human).